Reading from the N-terminus, the 513-residue chain is Protein STB3 (513 aa).

3 disordered regions span residues 1 to 20 (MSEN…KSEA), 134 to 159 (KDLI…KVEM), and 227 to 249 (YQNK…PYSF). A compositionally biased stretch (basic and acidic residues) spans 134–143 (KDLISQESQR). Residues 230-244 (KSRNSSNNFGKSSNG) are compositionally biased toward low complexity. A Phosphoserine modification is found at Ser254. Disordered stretches follow at residues 282–354 (RRRS…KESS), 373–437 (NSKA…EDWE), and 450–513 (APNI…SLKS). Residues 296–306 (KLNTHQDSSYL) are compositionally biased toward polar residues. Residues 307–324 (SPNTTSTTTPSNNNSNSN) show a composition bias toward low complexity. Composition is skewed to polar residues over residues 373–396 (NSKA…SNPI), 409–418 (QHLNGESSPQ), 450–463 (APNI…TNGV), and 470–479 (NPSFTNSQNG). Positions 488-500 (DQQKHEQQPRNGE) are enriched in basic and acidic residues.

The protein belongs to the STB3 family. Interacts with SIN3.

It is found in the cytoplasm. This Saccharomyces cerevisiae (strain ATCC 204508 / S288c) (Baker's yeast) protein is Protein STB3 (STB3).